The primary structure comprises 1059 residues: Isoleucine--tRNA ligase (1059 aa).

The 'HIGH' region motif lies at 47 to 57 (PYTSGQMHLGT). The short motif at 606 to 610 (KMSKS) is the 'KMSKS' region element. Lys-609 contacts ATP.

Belongs to the class-I aminoacyl-tRNA synthetase family. IleS type 2 subfamily. As to quaternary structure, monomer. Zn(2+) is required as a cofactor.

The protein resides in the cytoplasm. It carries out the reaction tRNA(Ile) + L-isoleucine + ATP = L-isoleucyl-tRNA(Ile) + AMP + diphosphate. Its function is as follows. Catalyzes the attachment of isoleucine to tRNA(Ile). As IleRS can inadvertently accommodate and process structurally similar amino acids such as valine, to avoid such errors it has two additional distinct tRNA(Ile)-dependent editing activities. One activity is designated as 'pretransfer' editing and involves the hydrolysis of activated Val-AMP. The other activity is designated 'posttransfer' editing and involves deacylation of mischarged Val-tRNA(Ile). This is Isoleucine--tRNA ligase from Haloquadratum walsbyi (strain DSM 16790 / HBSQ001).